A 371-amino-acid chain; its full sequence is Putative RING finger protein ORF117 (371 aa).

Residues 72–108 (CCICFRKDVIYKEVPCGHYICVECYKEPIRNVCPECN) form an RING-type zinc finger. The segment covering 178–192 (EEEMNESEAEEEEPV) has biased composition (acidic residues). A disordered region spans residues 178–218 (EEEMNESEAEEEEPVPEIAQFEALNTPPPPPTNRRPKIRRP).

This is Putative RING finger protein ORF117 from Magallana gigas (Pacific oyster).